Here is a 153-residue protein sequence, read N- to C-terminus: Large ribosomal subunit protein uL13 (153 aa).

Belongs to the universal ribosomal protein uL13 family. As to quaternary structure, part of the 50S ribosomal subunit.

In terms of biological role, this protein is one of the early assembly proteins of the 50S ribosomal subunit, although it is not seen to bind rRNA by itself. It is important during the early stages of 50S assembly. The chain is Large ribosomal subunit protein uL13 from Methylobacterium nodulans (strain LMG 21967 / CNCM I-2342 / ORS 2060).